The primary structure comprises 229 residues: Putative ankyrin repeat protein L148 (229 aa).

ANK repeat units lie at residues 70 to 95 (ILDY…PDNY), 96 to 126 (IGTE…DLRI), 127 to 156 (NNDY…NCQA), and 157 to 186 (YNNA…SVAA).

In Acanthamoeba polyphaga (Amoeba), this protein is Putative ankyrin repeat protein L148.